Here is a 141-residue protein sequence, read N- to C-terminus: Large ribosomal subunit protein uL11 (141 aa).

This sequence belongs to the universal ribosomal protein uL11 family. Part of the ribosomal stalk of the 50S ribosomal subunit. Interacts with L10 and the large rRNA to form the base of the stalk. L10 forms an elongated spine to which L12 dimers bind in a sequential fashion forming a multimeric L10(L12)X complex. One or more lysine residues are methylated.

Forms part of the ribosomal stalk which helps the ribosome interact with GTP-bound translation factors. The chain is Large ribosomal subunit protein uL11 from Latilactobacillus sakei subsp. sakei (strain 23K) (Lactobacillus sakei subsp. sakei).